The primary structure comprises 541 residues: Tyrosine-protein kinase Yes (541 aa).

Glycine 2 carries the N-myristoyl glycine lipid modification. A lipid anchor (S-palmitoyl cysteine; in membrane form) is attached at cysteine 3. Tyrosine 32 carries the post-translational modification Phosphotyrosine. The 62-residue stretch at 89-150 (GGVTIFVALY…PSNYVVPADS (62 aa)) folds into the SH3 domain. One can recognise an SH2 domain in the interval 156–253 (WYFGKMGRKD…GLCHKLTTVC (98 aa)). The region spanning 275 to 528 (LRLEVKLGQG…YIQSFLEDYF (254 aa)) is the Protein kinase domain. Residues 281–289 (LGQGCFGEV) and lysine 303 each bind ATP. Residues tyrosine 334 and tyrosine 343 each carry the phosphotyrosine modification. Residue aspartate 394 is the Proton acceptor of the active site. Tyrosine 424 is subject to Phosphotyrosine; by autocatalysis. The residue at position 535 (tyrosine 535) is a Phosphotyrosine.

This sequence belongs to the protein kinase superfamily. Tyr protein kinase family. SRC subfamily. In terms of assembly, interacts with YAP1. Interacts with FASLG. Interacts with CTNND1; this interaction allows YES1-mediated activation of FYN and FER and subsequent phosphorylation of CTNND1. Interacts with CSF1R. Interacts with IL6ST/gp130. Interacts with SCRIB, when YES1 is in a closed conformation; the interaction facilitates YES1 autophosphorylation. Post-translationally, phosphorylated. Phosphorylation by CSK on the C-terminal tail maintains the enzyme in an inactive state. Autophosphorylation at Tyr-424 maintains enzyme activity by blocking CSK-mediated inhibition. Palmitoylation at Cys-3 promotes membrane localization.

The protein resides in the cell membrane. The protein localises to the cytoplasm. Its subcellular location is the cytoskeleton. It localises to the microtubule organizing center. It is found in the centrosome. The protein resides in the cytosol. The protein localises to the cell junction. It carries out the reaction L-tyrosyl-[protein] + ATP = O-phospho-L-tyrosyl-[protein] + ADP + H(+). Its function is as follows. Non-receptor protein tyrosine kinase that is involved in the regulation of cell growth and survival, apoptosis, cell-cell adhesion, cytoskeleton remodeling, and differentiation. Stimulation by receptor tyrosine kinases (RTKs) including EGFR, PDGFR, CSF1R and FGFR leads to recruitment of YES1 to the phosphorylated receptor, and activation and phosphorylation of downstream substrates. Upon EGFR activation, promotes the phosphorylation of PARD3 to favor epithelial tight junction assembly. Participates in the phosphorylation of specific junctional components such as CTNND1 by stimulating the FYN and FER tyrosine kinases at cell-cell contacts. Upon T-cell stimulation by CXCL12, phosphorylates collapsin response mediator protein 2/DPYSL2 and induces T-cell migration. Participates in CD95L/FASLG signaling pathway and mediates AKT-mediated cell migration. Plays a role in cell cycle progression by phosphorylating the cyclin dependent kinase 4/CDK4 thus regulating the G1 phase. Also involved in G2/M progression and cytokinesis. Catalyzes phosphorylation of organic cation transporter OCT2 which induces its transport activity. This chain is Tyrosine-protein kinase Yes (Yes1), found in Mus musculus (Mouse).